The primary structure comprises 635 residues: Arabinoxylan arabinofuranohydrolase (635 aa).

The N-terminal stretch at 1–26 is a signal peptide; it reads MIRKCLVLFLSFALLLSVFPMLNVDA. The active-site Proton acceptor is the D49. E248 functions as the Proton donor in the catalytic mechanism. N311 provides a ligand contact to substrate. 2 consecutive CBM6 domains span residues 379–508 and 517–634; these read TRVE…WQFT and TKVE…IEFS. The Ca(2+) site is built by E382, E384, N406, L407, D503, E520, E522, D539, Y544, D620, W624, D625, and D629.

It belongs to the glycosyl hydrolase 43 family.

It is found in the secreted. It catalyses the reaction Hydrolysis of terminal non-reducing alpha-L-arabinofuranoside residues in alpha-L-arabinosides.. It participates in glycan degradation; xylan degradation. Its activity is regulated as follows. Activated by calcium and magnesium. Inhibited by copper. Cleaves arabinose units from O-2- or O-3-monosubstituted xylose residues, thereby assisting in arabinoxylan (AX) and short-chain arabinoxylo-oligosaccharide (AXOS) degradation. Preferres wheat flour xylan over oat spelt xylan as substrate. Does not display endoxylanase activity. The polypeptide is Arabinoxylan arabinofuranohydrolase (xynD) (Paenibacillus polymyxa (Bacillus polymyxa)).